We begin with the raw amino-acid sequence, 434 residues long: Adenylosuccinate synthetase (434 aa).

Residues 12-18 (GDEGKGK) and 40-42 (GHT) contribute to the GTP site. The Proton acceptor role is filled by D13. Mg(2+)-binding residues include D13 and G40. IMP contacts are provided by residues 13–16 (DEGK), 38–41 (NAGH), T129, R143, Q224, T239, and R303. The active-site Proton donor is the H41. 299–305 (AVTGRPR) contributes to the substrate binding site. GTP-binding positions include R305, 331-333 (KLD), and 413-415 (STG).

It belongs to the adenylosuccinate synthetase family. In terms of assembly, homodimer. Mg(2+) is required as a cofactor.

It localises to the cytoplasm. It carries out the reaction IMP + L-aspartate + GTP = N(6)-(1,2-dicarboxyethyl)-AMP + GDP + phosphate + 2 H(+). It functions in the pathway purine metabolism; AMP biosynthesis via de novo pathway; AMP from IMP: step 1/2. In terms of biological role, plays an important role in the de novo pathway of purine nucleotide biosynthesis. Catalyzes the first committed step in the biosynthesis of AMP from IMP. This chain is Adenylosuccinate synthetase, found in Solibacter usitatus (strain Ellin6076).